A 288-amino-acid polypeptide reads, in one-letter code: Thiamine-monophosphate kinase (288 aa).

Mg(2+)-binding residues include Asp-20, Thr-30, and Asp-32. A substrate-binding site is contributed by Asp-39. 2 residues coordinate Mg(2+): Asp-60 and Asp-107. Residues 106–107 (GD) and Arg-130 contribute to the ATP site. Asp-188 provides a ligand contact to Mg(2+). Ser-190 is an ATP binding site. Asp-191 contributes to the Mg(2+) binding site. Trp-286 is a binding site for substrate.

It belongs to the thiamine-monophosphate kinase family.

The catalysed reaction is thiamine phosphate + ATP = thiamine diphosphate + ADP. Its pathway is cofactor biosynthesis; thiamine diphosphate biosynthesis; thiamine diphosphate from thiamine phosphate: step 1/1. In terms of biological role, catalyzes the ATP-dependent phosphorylation of thiamine-monophosphate (TMP) to form thiamine-pyrophosphate (TPP), the active form of vitamin B1. The polypeptide is Thiamine-monophosphate kinase (Halobacterium salinarum (strain ATCC 700922 / JCM 11081 / NRC-1) (Halobacterium halobium)).